A 117-amino-acid chain; its full sequence is Large ribosomal subunit protein uL18 (117 aa).

Belongs to the universal ribosomal protein uL18 family. In terms of assembly, part of the 50S ribosomal subunit; part of the 5S rRNA/L5/L18/L25 subcomplex. Contacts the 5S and 23S rRNAs.

Its function is as follows. This is one of the proteins that bind and probably mediate the attachment of the 5S RNA into the large ribosomal subunit, where it forms part of the central protuberance. This is Large ribosomal subunit protein uL18 from Mannheimia succiniciproducens (strain KCTC 0769BP / MBEL55E).